The sequence spans 307 residues: 4-diphosphocytidyl-2-C-methyl-D-erythritol kinase (307 aa).

The active site involves K16. An ATP-binding site is contributed by 101–111; that stretch reads PVAGGMAGGSA. Residue D143 is part of the active site.

Belongs to the GHMP kinase family. IspE subfamily.

It carries out the reaction 4-CDP-2-C-methyl-D-erythritol + ATP = 4-CDP-2-C-methyl-D-erythritol 2-phosphate + ADP + H(+). It participates in isoprenoid biosynthesis; isopentenyl diphosphate biosynthesis via DXP pathway; isopentenyl diphosphate from 1-deoxy-D-xylulose 5-phosphate: step 3/6. In terms of biological role, catalyzes the phosphorylation of the position 2 hydroxy group of 4-diphosphocytidyl-2C-methyl-D-erythritol. The chain is 4-diphosphocytidyl-2-C-methyl-D-erythritol kinase from Nocardia farcinica (strain IFM 10152).